The following is a 272-amino-acid chain: 3-methyl-2-oxobutanoate hydroxymethyltransferase (272 aa).

Mg(2+) contacts are provided by D43 and D82. 3-methyl-2-oxobutanoate is bound by residues D43–S44, D82, and K112. E114 is a binding site for Mg(2+). Catalysis depends on E179, which acts as the Proton acceptor.

Belongs to the PanB family. As to quaternary structure, homodecamer; pentamer of dimers. Requires Mg(2+) as cofactor.

The protein localises to the cytoplasm. It catalyses the reaction 3-methyl-2-oxobutanoate + (6R)-5,10-methylene-5,6,7,8-tetrahydrofolate + H2O = 2-dehydropantoate + (6S)-5,6,7,8-tetrahydrofolate. The protein operates within cofactor biosynthesis; (R)-pantothenate biosynthesis; (R)-pantoate from 3-methyl-2-oxobutanoate: step 1/2. Its function is as follows. Catalyzes the reversible reaction in which hydroxymethyl group from 5,10-methylenetetrahydrofolate is transferred onto alpha-ketoisovalerate to form ketopantoate. The protein is 3-methyl-2-oxobutanoate hydroxymethyltransferase of Staphylococcus aureus (strain Newman).